Here is a 339-residue protein sequence, read N- to C-terminus: Ketol-acid reductoisomerase (NADP(+)) (339 aa).

One can recognise a KARI N-terminal Rossmann domain in the interval 1–182; it reads MRVYYDRDAD…GGGRSGVIET (182 aa). NADP(+) is bound by residues 24-27, Arg-48, Ser-51, Thr-53, and 83-86; these read YGSQ and DELQ. The active site involves His-108. Gly-134 lines the NADP(+) pocket. The region spanning 183–328 is the KARI C-terminal knotted domain; it reads TFKEECETDL…GKLRAMMPWI (146 aa). Residues Asp-191, Glu-195, Glu-227, and Glu-231 each coordinate Mg(2+). Ser-252 is a substrate binding site.

The protein belongs to the ketol-acid reductoisomerase family. Mg(2+) serves as cofactor.

It carries out the reaction (2R)-2,3-dihydroxy-3-methylbutanoate + NADP(+) = (2S)-2-acetolactate + NADPH + H(+). It catalyses the reaction (2R,3R)-2,3-dihydroxy-3-methylpentanoate + NADP(+) = (S)-2-ethyl-2-hydroxy-3-oxobutanoate + NADPH + H(+). It participates in amino-acid biosynthesis; L-isoleucine biosynthesis; L-isoleucine from 2-oxobutanoate: step 2/4. The protein operates within amino-acid biosynthesis; L-valine biosynthesis; L-valine from pyruvate: step 2/4. In terms of biological role, involved in the biosynthesis of branched-chain amino acids (BCAA). Catalyzes an alkyl-migration followed by a ketol-acid reduction of (S)-2-acetolactate (S2AL) to yield (R)-2,3-dihydroxy-isovalerate. In the isomerase reaction, S2AL is rearranged via a Mg-dependent methyl migration to produce 3-hydroxy-3-methyl-2-ketobutyrate (HMKB). In the reductase reaction, this 2-ketoacid undergoes a metal-dependent reduction by NADPH to yield (R)-2,3-dihydroxy-isovalerate. The sequence is that of Ketol-acid reductoisomerase (NADP(+)) from Brucella canis (strain ATCC 23365 / NCTC 10854 / RM-666).